A 3225-amino-acid chain; its full sequence is Intermembrane lipid transfer protein VPS13 (3225 aa).

Residues 1-1390 (MLEGLVAGLL…VFAADVEQHT (1390 aa)) form an involved in phospholipid binding region. The Chorein N-terminal domain maps to 2–115 (LEGLVAGLLN…RHRLKMEKLD (114 aa)). Disordered regions lie at residues 1568–1610 (PEAP…QQLV) and 1768–1799 (AGLK…SHSG). Over residues 1590 to 1610 (VRVGSSGRHSESSAGSGQQLV) the composition is skewed to low complexity. The segment covering 1777 to 1799 (GKGTSTLATRTRHASQSAASHSG) has biased composition (polar residues). In terms of domain architecture, SHR-BD spans 2290-2570 (FKVTVYSPYV…PYAWDFPAAK (281 aa)).

Belongs to the VPS13 family.

The protein localises to the membrane. Its function is as follows. Mediates the transfer of lipids between membranes at organelle contact sites. Binds phospholipids, including phosphatidylcholine (PC), phosphatidylethanolamine (PE), phosphatidic acid (PA), and phosphatidylserine (PS). May play a role in mitochondrial lipid homeostasis, Golgi vesicle transport, reticulophagy, actin cytoskeleton organization and formation of the prospore membrane. The chain is Intermembrane lipid transfer protein VPS13 from Chaetomium thermophilum (strain DSM 1495 / CBS 144.50 / IMI 039719) (Thermochaetoides thermophila).